A 247-amino-acid polypeptide reads, in one-letter code: UPF0259 membrane protein BUsg_265 (247 aa).

6 consecutive transmembrane segments (helical) span residues 20–40, 82–102, 114–134, 137–157, 188–208, and 217–237; these read IKII…INVL, IFKI…IITL, IQFS…LNFI, FFIQ…SVLL, IVGT…TVFS, and FIFL…IVYL.

It belongs to the UPF0259 family.

The protein resides in the cell membrane. This chain is UPF0259 membrane protein BUsg_265, found in Buchnera aphidicola subsp. Schizaphis graminum (strain Sg).